The primary structure comprises 244 residues: Protein IN2-1 homolog B (244 aa).

The segment at 1–27 (MAAAAAAPASSEKEVLPPSLTSSSEPP) is disordered. Positions 32–113 (GTTRLYVAYH…YIDTNFEGPA (82 aa)) constitute a GST N-terminal domain. Glutathione-binding positions include V85 and 97 to 98 (ES). The GST C-terminal domain maps to 118 to 241 (DSEKQQFAEE…FLLEHTKKRL (124 aa)).

In Oryza sativa subsp. indica (Rice), this protein is Protein IN2-1 homolog B (GSTZ5).